We begin with the raw amino-acid sequence, 145 residues long: Small ribosomal subunit protein bS6 (145 aa).

It belongs to the bacterial ribosomal protein bS6 family.

Functionally, binds together with bS18 to 16S ribosomal RNA. The polypeptide is Small ribosomal subunit protein bS6 (Mycoplasmopsis agalactiae (strain NCTC 10123 / CIP 59.7 / PG2) (Mycoplasma agalactiae)).